The primary structure comprises 185 residues: Large ribosomal subunit protein uL5 (185 aa).

The protein belongs to the universal ribosomal protein uL5 family. Part of the 50S ribosomal subunit; part of the 5S rRNA/L5/L18/L25 subcomplex. Contacts the 5S rRNA and the P site tRNA. Forms a bridge to the 30S subunit in the 70S ribosome.

Its function is as follows. This is one of the proteins that bind and probably mediate the attachment of the 5S RNA into the large ribosomal subunit, where it forms part of the central protuberance. In the 70S ribosome it contacts protein S13 of the 30S subunit (bridge B1b), connecting the 2 subunits; this bridge is implicated in subunit movement. Contacts the P site tRNA; the 5S rRNA and some of its associated proteins might help stabilize positioning of ribosome-bound tRNAs. The polypeptide is Large ribosomal subunit protein uL5 (Magnetococcus marinus (strain ATCC BAA-1437 / JCM 17883 / MC-1)).